The following is an 82-amino-acid chain: UPF0213 protein SSP2268 (82 aa).

A GIY-YIG domain is found at 2 to 77; it reads DKHYIYIVKC…KTFSRQKKLK (76 aa).

Belongs to the UPF0213 family.

The chain is UPF0213 protein SSP2268 from Staphylococcus saprophyticus subsp. saprophyticus (strain ATCC 15305 / DSM 20229 / NCIMB 8711 / NCTC 7292 / S-41).